We begin with the raw amino-acid sequence, 343 residues long: L-threonine 3-dehydrogenase (343 aa).

Cys-38 serves as a coordination point for Zn(2+). Residues Thr-40 and His-43 each act as charge relay system in the active site. Positions 63, 64, 93, 96, 99, and 107 each coordinate Zn(2+). NAD(+) is bound by residues Ile-175, Asp-195, Arg-200, 262-264, and 286-287; these read LGI and IY.

This sequence belongs to the zinc-containing alcohol dehydrogenase family. In terms of assembly, homotetramer. It depends on Zn(2+) as a cofactor.

The protein localises to the cytoplasm. It carries out the reaction L-threonine + NAD(+) = (2S)-2-amino-3-oxobutanoate + NADH + H(+). Its pathway is amino-acid degradation; L-threonine degradation via oxydo-reductase pathway; glycine from L-threonine: step 1/2. Functionally, catalyzes the NAD(+)-dependent oxidation of L-threonine to 2-amino-3-ketobutyrate. The chain is L-threonine 3-dehydrogenase from Paraburkholderia xenovorans (strain LB400).